A 405-amino-acid polypeptide reads, in one-letter code: Tryptophan synthase beta chain (405 aa).

An N6-(pyridoxal phosphate)lysine modification is found at lysine 98.

It belongs to the TrpB family. In terms of assembly, tetramer of two alpha and two beta chains. Requires pyridoxal 5'-phosphate as cofactor.

The enzyme catalyses (1S,2R)-1-C-(indol-3-yl)glycerol 3-phosphate + L-serine = D-glyceraldehyde 3-phosphate + L-tryptophan + H2O. It participates in amino-acid biosynthesis; L-tryptophan biosynthesis; L-tryptophan from chorismate: step 5/5. In terms of biological role, the beta subunit is responsible for the synthesis of L-tryptophan from indole and L-serine. This Stenotrophomonas maltophilia (strain R551-3) protein is Tryptophan synthase beta chain.